The following is a 280-amino-acid chain: Proteasome subunit beta (280 aa).

A propeptide spans 1–53 (MSEYSAGRSGFSPAYLDRVGSSFTDFLAAAAPHLLPGSRPVPQIPVGNVTPHG) (removed in mature form; by autocatalysis). Catalysis depends on T54, which acts as the Nucleophile.

It belongs to the peptidase T1B family. In terms of assembly, the 20S proteasome core is composed of 14 alpha and 14 beta subunits that assemble into four stacked heptameric rings, resulting in a barrel-shaped structure. The two inner rings, each composed of seven catalytic beta subunits, are sandwiched by two outer rings, each composed of seven alpha subunits. The catalytic chamber with the active sites is on the inside of the barrel. Has a gated structure, the ends of the cylinder being occluded by the N-termini of the alpha-subunits. Is capped by the proteasome-associated ATPase, ARC.

The protein localises to the cytoplasm. The enzyme catalyses Cleavage of peptide bonds with very broad specificity.. Its pathway is protein degradation; proteasomal Pup-dependent pathway. The formation of the proteasomal ATPase ARC-20S proteasome complex, likely via the docking of the C-termini of ARC into the intersubunit pockets in the alpha-rings, may trigger opening of the gate for substrate entry. Interconversion between the open-gate and close-gate conformations leads to a dynamic regulation of the 20S proteasome proteolysis activity. Component of the proteasome core, a large protease complex with broad specificity involved in protein degradation. The polypeptide is Proteasome subunit beta (Geodermatophilus obscurus (strain ATCC 25078 / DSM 43160 / JCM 3152 / CCUG 61914 / KCC A-0152 / KCTC 9177 / NBRC 13315 / NRRL B-3577 / G-20)).